We begin with the raw amino-acid sequence, 634 residues long: Chaperone protein HtpG (634 aa).

An a; substrate-binding region spans residues 1-344 (MSETVSQNKE…SNDLPLNVSR (344 aa)). The tract at residues 345-561 (EILQDNKVTQ…DYEMGTQMAK (217 aa)) is b. The segment at 562-634 (LLAAAGQAVP…GAINKLLTKV (73 aa)) is c.

The protein belongs to the heat shock protein 90 family. Homodimer.

The protein localises to the cytoplasm. In terms of biological role, molecular chaperone. Has ATPase activity. This chain is Chaperone protein HtpG, found in Vibrio parahaemolyticus serotype O3:K6 (strain RIMD 2210633).